We begin with the raw amino-acid sequence, 315 residues long: tRNA dimethylallyltransferase (315 aa).

13–20 (GPTASGKT) is an ATP binding site. 15-20 (TASGKT) serves as a coordination point for substrate. Interaction with substrate tRNA stretches follow at residues 38 to 41 (DSAL), 162 to 166 (QRIQR), and 245 to 250 (RCVGYR).

The protein belongs to the IPP transferase family. As to quaternary structure, monomer. The cofactor is Mg(2+).

It catalyses the reaction adenosine(37) in tRNA + dimethylallyl diphosphate = N(6)-dimethylallyladenosine(37) in tRNA + diphosphate. Its function is as follows. Catalyzes the transfer of a dimethylallyl group onto the adenine at position 37 in tRNAs that read codons beginning with uridine, leading to the formation of N6-(dimethylallyl)adenosine (i(6)A). This is tRNA dimethylallyltransferase from Methylobacillus flagellatus (strain ATCC 51484 / DSM 6875 / VKM B-1610 / KT).